The sequence spans 2191 residues: Genome polyprotein (2191 aa).

G2 is lipidated: N-myristoyl glycine; by host. Topologically, residues 2–1501 (GAQVSTQKTG…HVSRAFICLQ (1500 aa)) are cytoplasmic. Residues 566-582 (FYQNDVQNAVERSIVRV) are amphipathic alpha-helix. Active-site for protease 2A activity residues include H878 and D896. Zn(2+) is bound by residues C913 and C915. The active-site For protease 2A activity is the C967. C973 and H975 together coordinate Zn(2+). Residues 1107-1179 (NNGWLKKFTE…EQSAPSQSDQ (73 aa)) are membrane-binding. Residues 1107-1245 (NNGWLKKFTE…SPGVGKSVAT (139 aa)) form an oligomerization region. The interval 1128–1132 (AIKIQ) is RNA-binding. An SF3 helicase domain is found at 1211–1367 (EKKMSNYIQF…SMYNQNGKIN (157 aa)). Positions 1375, 1387, and 1392 each coordinate Zn(2+). The segment at 1375–1392 (CDEECCPVNFKKCCPLVC) adopts a C4-type; degenerate zinc-finger fold. The tract at residues 1419–1426 (EYNHRHSV) is RNA-binding. Residues 1430–1435 (LEALFQ) form an oligomerization region. An intramembrane segment occupies 1502 to 1517 (ALTTFVSVAGIIYIIY). Topologically, residues 1518–2191 (KLFAGFQGAY…TLRRKWLDSF (674 aa)) are cytoplasmic. Y1527 is subject to O-(5'-phospho-RNA)-tyrosine. Residues 1547–1725 (GPAFEFAVAM…FSAALLKHYF (179 aa)) form the Peptidase C3 domain. Active-site for protease 3C activity residues include H1586, E1617, and C1693. The RdRp catalytic domain occupies 1956–2072 (GHLIAFDYSG…SYPWPIDASL (117 aa)). Residues D1962 and D2058 each coordinate Mg(2+).

Belongs to the picornaviruses polyprotein family. As to quaternary structure, interacts with capsid protein VP1 and capsid protein VP3 to form heterotrimeric protomers. In terms of assembly, interacts with capsid protein VP0, and capsid protein VP3 to form heterotrimeric protomers. Five protomers subsequently associate to form pentamers which serve as building blocks for the capsid. Interacts with capsid protein VP2, capsid protein VP3 and capsid protein VP4 following cleavage of capsid protein VP0. Interacts with host CD55 and FCGRT; these interactions promote virus attachment to the host cell and subsequent internalization. Interacts with capsid protein VP1 and capsid protein VP3 in the mature capsid. Interacts with host CD55 and FCGRT; these interactions promote virus attachment to the host cell and subsequent internalization. As to quaternary structure, interacts with capsid protein VP0 and capsid protein VP1 to form heterotrimeric protomers. Five protomers subsequently associate to form pentamers which serve as building blocks for the capsid. Interacts with capsid protein VP4 in the mature capsid. Interacts with protein 2C; this interaction may be important for virion morphogenesis. Interacts with host FCGRT; this interaction promotes virus attachment to the host cell and subsequent internalization. In terms of assembly, interacts with capsid protein VP1 and capsid protein VP3. Homodimer. As to quaternary structure, homohexamer; forms a hexameric ring structure with 6-fold symmetry characteristic of AAA+ ATPases. Interacts (via N-terminus) with host RTN3 (via reticulon domain); this interaction is important for viral replication. Interacts with capsid protein VP3; this interaction may be important for virion morphogenesis. In terms of assembly, interacts with protein 3CD. Homodimer. Interacts with host GBF1. Interacts (via GOLD domain) with host ACBD3 (via GOLD domain); this interaction allows the formation of a viral protein 3A/ACBD3 heterotetramer with a 2:2 stoichiometry, which will stimulate the recruitment of host PI4KB in order to synthesize PI4P at the viral RNA replication sites. As to quaternary structure, interacts with RNA-directed RNA polymerase. In terms of assembly, interacts with protein 3AB and with RNA-directed RNA polymerase. Interacts with Viral protein genome-linked and with protein 3CD. Mg(2+) serves as cofactor. In terms of processing, specific enzymatic cleavages in vivo by the viral proteases yield processing intermediates and the mature proteins. Post-translationally, myristoylation is required for the formation of pentamers during virus assembly. Further assembly of 12 pentamers and a molecule of genomic RNA generates the provirion. During virion maturation, immature virions are rendered infectious following cleavage of VP0 into VP4 and VP2. This maturation seems to be an autocatalytic event triggered by the presence of RNA in the capsid and it is followed by a conformational change infectious virion. In terms of processing, myristoylation is required during RNA encapsidation and formation of the mature virus particle. Post-translationally, VPg is uridylylated by the polymerase into VPg-pUpU. This acts as a nucleotide-peptide primer for the genomic RNA replication.

The protein localises to the virion. Its subcellular location is the host cytoplasm. It localises to the host cytoplasmic vesicle membrane. It is found in the host nucleus. It carries out the reaction a ribonucleoside 5'-triphosphate + H2O = a ribonucleoside 5'-diphosphate + phosphate + H(+). The catalysed reaction is Selective cleavage of Tyr-|-Gly bond in the picornavirus polyprotein.. The enzyme catalyses RNA(n) + a ribonucleoside 5'-triphosphate = RNA(n+1) + diphosphate. It catalyses the reaction Selective cleavage of Gln-|-Gly bond in the poliovirus polyprotein. In other picornavirus reactions Glu may be substituted for Gln, and Ser or Thr for Gly.. With respect to regulation, replication or transcription is subject to high level of random mutations by the nucleotide analog ribavirin. Forms an icosahedral capsid of pseudo T=3 symmetry with capsid proteins VP2 and VP3. The capsid is 300 Angstroms in diameter, composed of 60 copies of each capsid protein and enclosing the viral positive strand RNA genome. Capsid protein VP1 mainly forms the vertices of the capsid. Capsid protein VP1 interacts with host cell receptor to provide virion attachment to target host cells. This attachment induces virion internalization. Tyrosine kinases are probably involved in the entry process. After binding to its receptor, the capsid undergoes conformational changes. Capsid protein VP1 N-terminus (that contains an amphipathic alpha-helix) and capsid protein VP4 are externalized. Together, they shape a pore in the host membrane through which viral genome is translocated to host cell cytoplasm. Its function is as follows. Forms an icosahedral capsid of pseudo T=3 symmetry with capsid proteins VP2 and VP3. The capsid is 300 Angstroms in diameter, composed of 60 copies of each capsid protein and enclosing the viral positive strand RNA genome. In terms of biological role, lies on the inner surface of the capsid shell. After binding to the host receptor, the capsid undergoes conformational changes. Capsid protein VP4 is released, Capsid protein VP1 N-terminus is externalized, and together, they shape a pore in the host membrane through which the viral genome is translocated into the host cell cytoplasm. Functionally, component of immature procapsids, which is cleaved into capsid proteins VP4 and VP2 after maturation. Allows the capsid to remain inactive before the maturation step. Cysteine protease that cleaves viral polyprotein and specific host proteins. It is responsible for the autocatalytic cleavage between the P1 and P2 regions, which is the first cleavage occurring in the polyprotein. Also cleaves the host translation initiation factor EIF4G1, in order to shut down the capped cellular mRNA translation. Inhibits the host nucleus-cytoplasm protein and RNA trafficking by cleaving host members of the nuclear pores. Counteracts stress granule formation probably by antagonizing its assembly or promoting its dissassembly. Its function is as follows. Plays an essential role in the virus replication cycle by acting as a viroporin. Creates a pore in the host endoplasmic reticulum and as a consequence releases Ca2+ in the cytoplasm of infected cell. In turn, high levels of cytoplasmic calcium may trigger membrane trafficking and transport of viral ER-associated proteins to viroplasms, sites of viral genome replication. In terms of biological role, induces and associates with structural rearrangements of intracellular membranes. Displays RNA-binding, nucleotide binding and NTPase activities. May play a role in virion morphogenesis and viral RNA encapsidation by interacting with the capsid protein VP3. Functionally, localizes the viral replication complex to the surface of membranous vesicles. Together with protein 3CD binds the Cis-Active RNA Element (CRE) which is involved in RNA synthesis initiation. Acts as a cofactor to stimulate the activity of 3D polymerase, maybe through a nucleid acid chaperone activity. Localizes the viral replication complex to the surface of membranous vesicles. It inhibits host cell endoplasmic reticulum-to-Golgi apparatus transport and causes the disassembly of the Golgi complex, possibly through GBF1 interaction. This would result in depletion of MHC, trail receptors and IFN receptors at the host cell surface. Plays an essential role in viral RNA replication by recruiting ACBD3 and PI4KB at the viral replication sites, thereby allowing the formation of the rearranged membranous structures where viral replication takes place. Its function is as follows. Acts as a primer for viral RNA replication and remains covalently bound to viral genomic RNA. VPg is uridylylated prior to priming replication into VPg-pUpU. The oriI viral genomic sequence may act as a template for this. The VPg-pUpU is then used as primer on the genomic RNA poly(A) by the RNA-dependent RNA polymerase to replicate the viral genome. During genome replication, the VPg-RNA linkage is removed by the host TDP2, thereby accelerating replication. During the late stage of the replication cycle, host TDP2 is excluded from sites of viral RNA synthesis and encapsidation, allowing for the generation of progeny virions. In terms of biological role, involved in the viral replication complex and viral polypeptide maturation. It exhibits protease activity with a specificity and catalytic efficiency that is different from protease 3C. Protein 3CD binds to the 5'UTR of the viral genome. Functionally, replicates the viral genomic RNA on the surface of intracellular membranes. May form linear arrays of subunits that propagate along a strong head-to-tail interaction called interface-I. Covalently attaches UMP to a tyrosine of VPg, which is used to prime RNA synthesis. The positive stranded RNA genome is first replicated at virus induced membranous vesicles, creating a dsRNA genomic replication form. This dsRNA is then used as template to synthesize positive stranded RNA genomes. ss(+)RNA genomes are either translated, replicated or encapsidated. Major viral protease that mediates proteolytic processing of the polyprotein. Cleaves host EIF5B, contributing to host translation shutoff. Also cleaves host PABPC1, contributing to host translation shutoff. Cleaves host NLRP1, triggers host N-glycine-mediated degradation of the autoinhibitory NLRP1 N-terminal fragment. The sequence is that of Genome polyprotein from Echovirus 6 (strain Charles).